The sequence spans 310 residues: Aspartate carbamoyltransferase catalytic subunit (310 aa).

Arginine 58 and threonine 59 together coordinate carbamoyl phosphate. Lysine 86 lines the L-aspartate pocket. Residues arginine 108, histidine 136, and glutamine 139 each contribute to the carbamoyl phosphate site. L-aspartate is bound by residues arginine 169 and arginine 222. Carbamoyl phosphate-binding residues include glycine 264 and proline 265.

The protein belongs to the aspartate/ornithine carbamoyltransferase superfamily. ATCase family. In terms of assembly, heterododecamer (2C3:3R2) of six catalytic PyrB chains organized as two trimers (C3), and six regulatory PyrI chains organized as three dimers (R2).

It catalyses the reaction carbamoyl phosphate + L-aspartate = N-carbamoyl-L-aspartate + phosphate + H(+). The protein operates within pyrimidine metabolism; UMP biosynthesis via de novo pathway; (S)-dihydroorotate from bicarbonate: step 2/3. Functionally, catalyzes the condensation of carbamoyl phosphate and aspartate to form carbamoyl aspartate and inorganic phosphate, the committed step in the de novo pyrimidine nucleotide biosynthesis pathway. This Campylobacter fetus subsp. fetus (strain 82-40) protein is Aspartate carbamoyltransferase catalytic subunit.